We begin with the raw amino-acid sequence, 109 residues long: Large ribosomal subunit protein uL24 (109 aa).

The protein belongs to the universal ribosomal protein uL24 family. In terms of assembly, part of the 50S ribosomal subunit.

Its function is as follows. One of two assembly initiator proteins, it binds directly to the 5'-end of the 23S rRNA, where it nucleates assembly of the 50S subunit. Functionally, one of the proteins that surrounds the polypeptide exit tunnel on the outside of the subunit. This is Large ribosomal subunit protein uL24 from Syntrophobacter fumaroxidans (strain DSM 10017 / MPOB).